A 552-amino-acid chain; its full sequence is 5'-AMP-activated protein kinase catalytic subunit alpha-2 (552 aa).

Residues 16-268 form the Protein kinase domain; the sequence is YVLGDTLGVG…IKDIREHEWF (253 aa). Residues 22-30 and lysine 45 each bind ATP; that span reads LGVGTFGKV. The active-site Proton acceptor is the aspartate 139. Threonine 172 is modified (phosphothreonine; by LKB1 and CaMKK2). Threonine 258 carries the post-translational modification Phosphothreonine. Residues 291–376 are AIS; it reads EAVKEVCEKF…PERMPPLIAD (86 aa). Serine 377 carries the post-translational modification Phosphoserine. The tract at residues 478–519 is disordered; the sequence is EQRSGSSTPQRSCSAAGLHRPRSSLDSVTAESHSLSGSLSGS. The span at 480–490 shows a compositional bias: polar residues; that stretch reads RSGSSTPQRSC. The residue at position 491 (serine 491) is a Phosphoserine. Low complexity predominate over residues 509–519; the sequence is SHSLSGSLSGS.

This sequence belongs to the protein kinase superfamily. CAMK Ser/Thr protein kinase family. SNF1 subfamily. AMPK is a heterotrimer of an alpha catalytic subunit (PRKAA1 or PRKAA2), a beta (PRKAB1 or PRKAB2) and a gamma non-catalytic subunits (PRKAG1, PRKAG2 or PRKAG3). Interacts with FNIP1 and FNIP2. Interacts with DUSP29. Interacts with ARF6. The phosphorylated form at Thr-172 mediated by CamKK2 interacts with ACSS2. The cofactor is Mg(2+). In terms of processing, ubiquitinated. Post-translationally, phosphorylated at Thr-172 by STK11/LKB1 in complex with STE20-related adapter-alpha (STRADA) pseudo kinase and CAB39. Also phosphorylated at Thr-172 by CAMKK2; triggered by a rise in intracellular calcium ions, without detectable changes in the AMP/ATP ratio. CAMKK1 can also phosphorylate Thr-172, but at much lower level. Dephosphorylated by protein phosphatase 2A and 2C (PP2A and PP2C). Phosphorylated by ULK1; leading to negatively regulate AMPK activity and suggesting the existence of a regulatory feedback loop between ULK1 and AMPK. Dephosphorylated by PPM1A and PPM1B at Thr-172 (mediated by STK11/LKB1).

The protein localises to the cytoplasm. It is found in the nucleus. It catalyses the reaction L-seryl-[protein] + ATP = O-phospho-L-seryl-[protein] + ADP + H(+). The enzyme catalyses L-threonyl-[protein] + ATP = O-phospho-L-threonyl-[protein] + ADP + H(+). It carries out the reaction L-seryl-[acetyl-CoA carboxylase] + ATP = O-phospho-L-seryl-[acetyl-CoA carboxylase] + ADP + H(+). The catalysed reaction is L-seryl-[3-hydroxy-3-methylglutaryl-coenzyme A reductase] + ATP = O-phospho-L-seryl-[3-hydroxy-3-methylglutaryl-coenzyme A reductase] + ADP + H(+). Activated by phosphorylation on Thr-172. Binding of AMP to non-catalytic gamma subunit (PRKAG1, PRKAG2 or PRKAG3) results in allosteric activation, inducing phosphorylation on Thr-172. AMP-binding to gamma subunit also sustains activity by preventing dephosphorylation of Thr-172. ADP also stimulates Thr-172 phosphorylation, without stimulating already phosphorylated AMPK. ATP promotes dephosphorylation of Thr-172, rendering the enzyme inactive. Under physiological conditions AMPK mainly exists in its inactive form in complex with ATP, which is much more abundant than AMP. Selectively inhibited by compound C (6-[4-(2-Piperidin-1-yl-ethoxy)-phenyl)]-3-pyridin-4-yl-pyyrazolo[1,5-a] pyrimidine. Activated by resveratrol, a natural polyphenol present in red wine, and S17834, a synthetic polyphenol. Salicylate/aspirin directly activates kinase activity, primarily by inhibiting Thr-172 dephosphorylation. In terms of biological role, catalytic subunit of AMP-activated protein kinase (AMPK), an energy sensor protein kinase that plays a key role in regulating cellular energy metabolism. In response to reduction of intracellular ATP levels, AMPK activates energy-producing pathways and inhibits energy-consuming processes: inhibits protein, carbohydrate and lipid biosynthesis, as well as cell growth and proliferation. AMPK acts via direct phosphorylation of metabolic enzymes, and by longer-term effects via phosphorylation of transcription regulators. Regulates lipid synthesis by phosphorylating and inactivating lipid metabolic enzymes such as ACACA, ACACB, GYS1, HMGCR and LIPE; regulates fatty acid and cholesterol synthesis by phosphorylating acetyl-CoA carboxylase (ACACA and ACACB) and hormone-sensitive lipase (LIPE) enzymes, respectively. Promotes lipolysis of lipid droplets by mediating phosphorylation of isoform 1 of CHKA (CHKalpha2). Regulates insulin-signaling and glycolysis by phosphorylating IRS1, PFKFB2 and PFKFB3. Involved in insulin receptor/INSR internalization. AMPK stimulates glucose uptake in muscle by increasing the translocation of the glucose transporter SLC2A4/GLUT4 to the plasma membrane, possibly by mediating phosphorylation of TBC1D4/AS160. Regulates transcription and chromatin structure by phosphorylating transcription regulators involved in energy metabolism such as CRTC2/TORC2, FOXO3, histone H2B, HDAC5, MEF2C, MLXIPL/ChREBP, EP300, HNF4A, p53/TP53, SREBF1, SREBF2 and PPARGC1A. Acts as a key regulator of glucose homeostasis in liver by phosphorylating CRTC2/TORC2, leading to CRTC2/TORC2 sequestration in the cytoplasm. In response to stress, phosphorylates 'Ser-36' of histone H2B (H2BS36ph), leading to promote transcription. Acts as a key regulator of cell growth and proliferation by phosphorylating FNIP1, TSC2, RPTOR, WDR24 and ATG1/ULK1: in response to nutrient limitation, negatively regulates the mTORC1 complex by phosphorylating RPTOR component of the mTORC1 complex and by phosphorylating and activating TSC2. Also phosphorylates and inhibits GATOR2 subunit WDR24 in response to nutrient limitation, leading to suppress glucose-mediated mTORC1 activation. In response to energetic stress, phosphorylates FNIP1, inactivating the non-canonical mTORC1 signaling, thereby promoting nuclear translocation of TFEB and TFE3, and inducing transcription of lysosomal or autophagy genes. In response to nutrient limitation, promotes autophagy by phosphorylating and activating ATG1/ULK1. In that process also activates WDR45/WIPI4. Phosphorylates CASP6, thereby preventing its autoprocessing and subsequent activation. AMPK also acts as a regulator of circadian rhythm by mediating phosphorylation of CRY1, leading to destabilize it. May regulate the Wnt signaling pathway by phosphorylating CTNNB1, leading to stabilize it. Also acts as a regulator of cellular polarity by remodeling the actin cytoskeleton; probably by indirectly activating myosin. Also phosphorylates CFTR, EEF2K, KLC1, NOS3 and SLC12A1. Plays an important role in the differential regulation of pro-autophagy (composed of PIK3C3, BECN1, PIK3R4 and UVRAG or ATG14) and non-autophagy (composed of PIK3C3, BECN1 and PIK3R4) complexes, in response to glucose starvation. Can inhibit the non-autophagy complex by phosphorylating PIK3C3 and can activate the pro-autophagy complex by phosphorylating BECN1. Upon glucose starvation, promotes ARF6 activation in a kinase-independent manner leading to cell migration. Upon glucose deprivation mediates the phosphorylation of ACSS2 at 'Ser-659', which exposes the nuclear localization signal of ACSS2, required for its interaction with KPNA1 and nuclear translocation. Upon stress, regulates mitochondrial fragmentation through phosphorylation of MTFR1L. The chain is 5'-AMP-activated protein kinase catalytic subunit alpha-2 (PRKAA2) from Sus scrofa (Pig).